The sequence spans 80 residues: Protein UL148B (80 aa).

A helical membrane pass occupies residues 10-30 (AICVGLVMGVTVIASCALLVF).

The protein localises to the host membrane. The chain is Protein UL148B (UL148B) from Homo sapiens (Human).